We begin with the raw amino-acid sequence, 737 residues long: Transcriptional repressor CTCF (737 aa).

An N-acetylmethionine modification is found at Met1. A Glycyl lysine isopeptide (Lys-Gly) (interchain with G-Cter in SUMO2) cross-link involves residue Lys18. Residue Lys74 forms a Glycyl lysine isopeptide (Lys-Gly) (interchain with G-Cter in SUMO) linkage. The tract at residues 180-211 (QGELPPQEDPSWQKDPDYQPPAKKTKKTKKSK) is disordered. The segment covering 202–211 (KKTKKTKKSK) has biased composition (basic residues). A Glycyl lysine isopeptide (Lys-Gly) (interchain with G-Cter in SUMO2) cross-link involves residue Lys219. A C2H2-type 1 zinc finger spans residues 266 to 288 (FQCELCSYTCPRRSNLDRHMKSH). Thr289 is subject to Phosphothreonine. Residues 294 to 316 (HKCHLCGRAFRTVTLLRNHLNTH) form a C2H2-type 2 zinc finger. The residue at position 317 (Thr317) is a Phosphothreonine. 2 consecutive C2H2-type zinc fingers follow at residues 322–345 (HKCPDCDMAFVTSGELVRHRRYKH) and 351–373 (FKCSMCDYASVEVSKLKRHIRSH). A Phosphothreonine modification is found at Thr374. The segment at 379–401 (FQCSLCSYASRDTYKLKRHMRTH) adopts a C2H2-type 5 zinc-finger fold. Ser402 bears the Phosphoserine mark. C2H2-type zinc fingers lie at residues 407-430 (YECYICHARFTQSGTMKMHILQKH), 437-460 (FHCPHCDTVIARKSDLGVHLRKQH), 467-489 (KKCRYCDAVFHERYALIQHQKSH), 495-517 (FKCDQCDYACRQERHMIMHKRTH), and 523-546 (YACSHCDKTFRQKQLLDMHFKRYH). The C2H2-type 11; atypical zinc finger occupies 555 to 577 (FVCSKCGKTFTRRNTMARHADNC). Disordered stretches follow at residues 573–687 (HADN…EDQN) and 699–727 (KKEPDAEPAEGEEEEAQAAPADAPNGDLT). The span at 593–604 (KSKRGRKRKMRS) shows a compositional bias: basic residues. Ser609, Ser610, and Ser612 each carry phosphoserine. The span at 610 to 636 (SDSENAEPDLDDNEEEEEPAVEIEPEP) shows a compositional bias: acidic residues. Pro residues predominate over residues 637–657 (EPQPQPQPQPQPQPVAPAPPP). Residues 668–687 (RTNQPKQNQPTAIIQVEDQN) are compositionally biased toward polar residues. Lys699 is covalently cross-linked (Glycyl lysine isopeptide (Lys-Gly) (interchain with G-Cter in SUMO); alternate). Residue Lys699 forms a Glycyl lysine isopeptide (Lys-Gly) (interchain with G-Cter in SUMO2); alternate linkage. The span at 704–714 (AEPAEGEEEEA) shows a compositional bias: acidic residues.

The protein belongs to the CTCF zinc-finger protein family. Interacts with CHD8. Interacts with LLPH. Interacts with CENPE. Interacts with BRD2; promoting BRD2 recruitment to chromatin. In terms of processing, sumoylated on Lys-74 and Lys-699; sumoylation of CTCF contributes to the repressive function of CTCF on the MYC P2 promoter.

It localises to the nucleus. It is found in the nucleoplasm. Its subcellular location is the chromosome. The protein resides in the centromere. Its function is as follows. Chromatin binding factor that binds to DNA sequence specific sites and regulates the 3D structure of chromatin. Binds together strands of DNA, thus forming chromatin loops, and anchors DNA to cellular structures, such as the nuclear lamina. Defines the boundaries between active and heterochromatic DNA via binding to chromatin insulators, thereby preventing interaction between promoter and nearby enhancers and silencers. Plays a critical role in the epigenetic regulation. Participates in the allele-specific gene expression at the imprinted IGF2/H19 gene locus. On the maternal allele, binding within the H19 imprinting control region (ICR) mediates maternally inherited higher-order chromatin conformation to restrict enhancer access to IGF2. Mediates interchromosomal association between IGF2/H19 and WSB1/NF1 and may direct distant DNA segments to a common transcription factory. Regulates asynchronous replication of IGF2/H19. Plays a critical role in gene silencing over considerable distances in the genome. Preferentially interacts with unmethylated DNA, preventing spreading of CpG methylation and maintaining methylation-free zones. Inversely, binding to target sites is prevented by CpG methylation. Plays an important role in chromatin remodeling. Can dimerize when it is bound to different DNA sequences, mediating long-range chromatin looping. Causes local loss of histone acetylation and gain of histone methylation in the beta-globin locus, without affecting transcription. When bound to chromatin, it provides an anchor point for nucleosomes positioning. Seems to be essential for homologous X-chromosome pairing. May participate with Tsix in establishing a regulatable epigenetic switch for X chromosome inactivation. May play a role in preventing the propagation of stable methylation at the escape genes from X-inactivation. Involved in sister chromatid cohesion. Associates with both centromeres and chromosomal arms during metaphase and required for cohesin localization to CTCF sites. Plays a role in the recruitment of CENPE to the pericentromeric/centromeric regions of the chromosome during mitosis. Acts as a transcriptional repressor binding to promoters of vertebrate MYC gene and BAG1 gene. Also binds to the PLK and PIM1 promoters. Acts as a transcriptional activator of APP. Regulates APOA1/C3/A4/A5 gene cluster and controls MHC class II gene expression. Plays an essential role in oocyte and preimplantation embryo development by activating or repressing transcription. Seems to act as tumor suppressor. The sequence is that of Transcriptional repressor CTCF (Ctcf) from Rattus norvegicus (Rat).